Here is a 259-residue protein sequence, read N- to C-terminus: Imidazole glycerol phosphate synthase subunit HisF (259 aa).

Catalysis depends on residues Asp11 and Asp130.

The protein belongs to the HisA/HisF family. In terms of assembly, heterodimer of HisH and HisF.

Its subcellular location is the cytoplasm. It carries out the reaction 5-[(5-phospho-1-deoxy-D-ribulos-1-ylimino)methylamino]-1-(5-phospho-beta-D-ribosyl)imidazole-4-carboxamide + L-glutamine = D-erythro-1-(imidazol-4-yl)glycerol 3-phosphate + 5-amino-1-(5-phospho-beta-D-ribosyl)imidazole-4-carboxamide + L-glutamate + H(+). It functions in the pathway amino-acid biosynthesis; L-histidine biosynthesis; L-histidine from 5-phospho-alpha-D-ribose 1-diphosphate: step 5/9. IGPS catalyzes the conversion of PRFAR and glutamine to IGP, AICAR and glutamate. The HisF subunit catalyzes the cyclization activity that produces IGP and AICAR from PRFAR using the ammonia provided by the HisH subunit. In Lactococcus lactis subsp. cremoris (strain SK11), this protein is Imidazole glycerol phosphate synthase subunit HisF.